Here is a 139-residue protein sequence, read N- to C-terminus: MPTINQLIRKGRVSKVENSKSPALNKGYNSFKKEHTNVTSPQKRGVCTRVGTMTPKKPNSALRKYARVRLSNLIEVTAYIPGIGHNLQEHSVVLIRGGRVKDLPGVRYHIVRGALDTAGVDGRMQGRSKYGTKRPKQSK.

3-methylthioaspartic acid is present on D102.

This sequence belongs to the universal ribosomal protein uS12 family. In terms of assembly, part of the 30S ribosomal subunit. Contacts proteins S8 and S17. May interact with IF1 in the 30S initiation complex.

Its function is as follows. With S4 and S5 plays an important role in translational accuracy. Functionally, interacts with and stabilizes bases of the 16S rRNA that are involved in tRNA selection in the A site and with the mRNA backbone. Located at the interface of the 30S and 50S subunits, it traverses the body of the 30S subunit contacting proteins on the other side and probably holding the rRNA structure together. The combined cluster of proteins S8, S12 and S17 appears to hold together the shoulder and platform of the 30S subunit. This is Small ribosomal subunit protein uS12 from Bacillus pumilus (strain SAFR-032).